Reading from the N-terminus, the 711-residue chain is Forkhead box protein P1 (711 aa).

Over residues 1–19 (MMQESGSEAKSNGSTIQNG) the composition is skewed to polar residues. Positions 1–41 (MMQESGSEAKSNGSTIQNGSSGGNHLLECGTLRDTRSNGEA) are disordered. Ser-115 carries the phosphoserine modification. Disordered stretches follow at residues 273–292 (HTAEETTGSNHSSLDLTSTC) and 305–332 (MNPHASTNGQLSVHTPKRESLSHEEHPH). Positions 305 to 317 (MNPHASTNGQLSV) are enriched in polar residues. Positions 320-332 (PKRESLSHEEHPH) are enriched in basic and acidic residues. A Glycyl lysine isopeptide (Lys-Gly) (interchain with G-Cter in SUMO2) cross-link involves residue Lys-321. The C2H2-type zinc finger occupies 340-365 (GVCKWPGCEAVCDDFPAFLKHLNSEH). Residues 382–403 (VQQLELQLAKDKERLQAMMTHL) are leucine-zipper. Glycyl lysine isopeptide (Lys-Gly) (interchain with G-Cter in SUMO2) cross-links involve residues Lys-406 and Lys-411. The interval 416-420 (PLNLV) is CTBP1-binding. A compositionally biased stretch (polar residues) spans 424–437 (TLSKSASEASPQSL). Residues 424–456 (TLSKSASEASPQSLPHTPTTPTAPLTPVTQGPS) are disordered. Residues 438–452 (PHTPTTPTAPLTPVT) show a composition bias toward low complexity. A Glycyl lysine isopeptide (Lys-Gly) (interchain with G-Cter in SUMO2) cross-link involves residue Lys-476. The segment at residues 499-589 (RPPFTYASLI…PQKISGNPSL (91 aa)) is a DNA-binding region (fork-head). Residues 645–711 (EHTNSNESDS…EDEPVNEDME (67 aa)) are disordered. Residues 646–657 (HTNSNESDSSPG) show a composition bias toward polar residues. Residue Thr-687 is modified to Phosphothreonine. The residue at position 692 (Ser-692) is a Phosphoserine. Over residues 701–711 (YEDEPVNEDME) the composition is skewed to acidic residues.

In terms of assembly, forms homodimers and heterodimers with FOXP2 and FOXP4. Dimerization is required for DNA-binding. Self-associates. Interacts with CTBP1. Interacts with NCOR2 and AR. Interacts with FOXP2. Interacts with TBR1. Interacts with AURKA; this interaction facilitates the phosphorylation of FOXP1, which suppresses the expression of FBXL7. Interacts with ZMYM2.

It is found in the nucleus. Functionally, transcriptional repressor. Can act with CTBP1 to synergistically repress transcription but CTPBP1 is not essential. Plays an important role in the specification and differentiation of lung epithelium. Acts cooperatively with FOXP4 to regulate lung secretory epithelial cell fate and regeneration by restricting the goblet cell lineage program; the function may involve regulation of AGR2. Essential transcriptional regulator of B-cell development. Involved in regulation of cardiac muscle cell proliferation. Involved in the columnar organization of spinal motor neurons. Promotes the formation of the lateral motor neuron column (LMC) and the preganglionic motor column (PGC) and is required for respective appropriate motor axon projections. The segment-appropriate generation of spinal cord motor columns requires cooperation with other Hox proteins. Can regulate PITX3 promoter activity; may promote midbrain identity in embryonic stem cell-derived dopamine neurons by regulating PITX3. Negatively regulates the differentiation of T follicular helper cells T(FH)s. Involved in maintenance of hair follicle stem cell quiescence; the function probably involves regulation of FGF18. Represses transcription of various pro-apoptotic genes and cooperates with NF-kappa B-signaling in promoting B-cell expansion by inhibition of caspase-dependent apoptosis. Binds to CSF1R promoter elements and is involved in regulation of monocyte differentiation and macrophage functions; repression of CSF1R in monocytes seems to involve NCOR2 as corepressor. Involved in endothelial cell proliferation, tube formation and migration indicative for a role in angiogenesis; the role in neovascularization seems to implicate suppression of SEMA5B. Can negatively regulate androgen receptor signaling. Acts as a transcriptional activator of the FBXL7 promoter; this activity is regulated by AURKA. This Rattus norvegicus (Rat) protein is Forkhead box protein P1 (Foxp1).